The primary structure comprises 613 residues: Zinc metalloproteinase-disintegrin-like VMP-III (613 aa).

The signal sequence occupies residues 1 to 20; the sequence is MIQVLLVTLCLAAFPYQGSS. Residues 21–190 constitute a propeptide that is removed on maturation; it reads IILDSGNVND…KKASQLVVTP (170 aa). A Peptidase M12B domain is found at 200–396; that stretch reads KYIELVIVAD…NRPPCILNKP (197 aa). E203 lines the Ca(2+) pocket. The N-linked (GlcNAc...) asparagine glycan is linked to N219. Residue D287 coordinates Ca(2+). Cystine bridges form between C311/C391, C351/C375, and C353/C358. H336 is a Zn(2+) binding site. E337 is a catalytic residue. Zn(2+)-binding residues include H340 and H346. Ca(2+) is bound by residues C391, N394, V406, N409, F411, E413, E416, and D419. Residues 404–490 enclose the Disintegrin domain; it reads PPVCGNYFVE…ECPTDDFQRN (87 aa). Disulfide bonds link C407–C436, C418–C431, C420–C426, C430–C453, C444–C450, C449–C475, C462–C482, C469–C501, C494–C506, C513–C563, C528–C574, C541–C551, C558–C600, and C594–C606. The D/ECD-tripeptide signature appears at 468–470; sequence ECD. The N-linked (GlcNAc...) asparagine glycan is linked to N503.

This sequence belongs to the venom metalloproteinase (M12B) family. P-III subfamily. P-IIIa sub-subfamily. As to quaternary structure, monomer. The cofactor is Zn(2+). Expressed by the venom gland.

Its subcellular location is the secreted. In terms of biological role, snake venom metalloproteinase that impairs hemostasis in the envenomed animal. This is Zinc metalloproteinase-disintegrin-like VMP-III from Agkistrodon piscivorus leucostoma (Western cottonmouth).